A 408-amino-acid chain; its full sequence is MDAFKRNLEKLAELAIRVGLNLEKGQEVIATAPIEAVDFVRLLAEKAYREGASLFTVIYGDQELARKRLALAPEEGLDKAPAWLYEGMARAFREGAARLAVSGSDPKALEGLPPEKVGRAQKANARAYKPALEAITEFVTNWTIVPFAHPGWARAVFPGLPEEEAVRRLWEAIFQATRADQEDPIAAWEAHNRALHEKVAYLNARRFHALHFKGPGTDLVVGLAEGHLWQGGATATKGGRLCNPNLPTEEVFTAPHRERVEGVVRASRPLALGGTLVEGIFARFERGFAVEVRAEKGEEVLRRLLDTDEGARRLGEVALVPADNPIAKTGLVFFDTLFDENAASHIAFGQAYQENLEGRPSGEAFRKRGGNESLVHVDWMIGSEEMDVDGLYEDGTRTPLMRRGRWVV.

The a divalent metal cation site is built by Glu-250, Glu-316, Glu-340, His-345, His-376, and Asp-378.

It belongs to the peptidase M29 family. In terms of assembly, homodimer. The cofactor is Co(2+). It depends on Zn(2+) as a cofactor. Requires Mg(2+) as cofactor.

Its function is as follows. Metal-dependent exopeptidase. This Thermus thermophilus (strain ATCC 27634 / DSM 579 / HB8) protein is Aminopeptidase T.